A 434-amino-acid chain; its full sequence is UDP-N-acetylglucosamine 1-carboxyvinyltransferase (434 aa).

22-23 (KN) is a phosphoenolpyruvate binding site. Residue Arg97 coordinates UDP-N-acetyl-alpha-D-glucosamine. Asp121 functions as the Proton donor in the catalytic mechanism. The UDP-N-acetyl-alpha-D-glucosamine site is built by Asp319 and Met341.

Belongs to the EPSP synthase family. MurA subfamily.

It is found in the cytoplasm. It catalyses the reaction phosphoenolpyruvate + UDP-N-acetyl-alpha-D-glucosamine = UDP-N-acetyl-3-O-(1-carboxyvinyl)-alpha-D-glucosamine + phosphate. It participates in cell wall biogenesis; peptidoglycan biosynthesis. In terms of biological role, cell wall formation. Adds enolpyruvyl to UDP-N-acetylglucosamine. The protein is UDP-N-acetylglucosamine 1-carboxyvinyltransferase of Porphyromonas gingivalis (strain ATCC BAA-308 / W83).